Consider the following 81-residue polypeptide: Albumin-1 (81 aa).

Positions 27–34 (LSSVAKMI) are excised as a propeptide.

Three disulfide bonds are probably present. In terms of processing, the C-terminal glycine may be removed from A1b.

Its function is as follows. A1b binds to basic 7S globulin (BG) and stimulates its phosphorylation activity. This is Albumin-1 (LEG1) from Lupinus angustifolius (Narrow-leaved blue lupine).